The primary structure comprises 393 residues: Zinc finger CCCH domain-containing protein 2 (393 aa).

The tract at residues 1–71 is disordered; sequence MDVVCTEHQM…NRENKEYCYD (71 aa). A compositionally biased stretch (low complexity) spans 20-37; that stretch reads RKLLLSSKSFPSDSSSPR. A compositionally biased stretch (basic and acidic residues) spans 60 to 69; the sequence is DNNRENKEYC. C3H1-type zinc fingers lie at residues 122-150 and 159-181; these read QYSG…HGVF and YRTE…AHSP.

As to quaternary structure, interacts with MARD1/FLZ9 and RD21A. Specifically expressed in seeds.

The protein resides in the nucleus. Its function is as follows. Probable transcription repressor that functions as a negative regulator of phytochrome-mediated promotion of seed germination. Inhibits seed germination by regulating the expression of gibberellic acid (GA) and abscisic acid (ABA) metabolic genes. Does not regulate the expression of the DELLA genes RGA and RGA1. Activated by PIL5, a phytochrome-interacting basic helix-loop-helix transcription factor. Represses directly JMJ20 and JMJ22 expression in the absence of red light (R) and in far-red (FR) conditions. The protein is Zinc finger CCCH domain-containing protein 2 of Arabidopsis thaliana (Mouse-ear cress).